A 442-amino-acid polypeptide reads, in one-letter code: Shufflon protein B (442 aa).

The segment at 1 to 361 (MKKYDRGWAS…TGAILSCQSG (361 aa)) is constant region. The interval 362-442 (TWKSSSASIW…SYFMKITCLK (81 aa)) is variable region.

This is Shufflon protein B from Escherichia coli.